Reading from the N-terminus, the 457-residue chain is Bifunctional protein GlmU (457 aa).

The interval 1–230 (MSKRYAVVLA…FEESLGVNDR (230 aa)) is pyrophosphorylase. UDP-N-acetyl-alpha-D-glucosamine contacts are provided by residues 9–12 (LAAG), lysine 23, glutamine 73, and 78–79 (GT). Aspartate 103 is a Mg(2+) binding site. Residues glycine 140, glutamate 155, asparagine 170, and asparagine 228 each coordinate UDP-N-acetyl-alpha-D-glucosamine. Asparagine 228 provides a ligand contact to Mg(2+). Residues 231–251 (IALAEASKLMQRRINENHMRN) form a linker region. The interval 252–457 (GVTLVNPENT…GYAKHLNHGK (206 aa)) is N-acetyltransferase. UDP-N-acetyl-alpha-D-glucosamine is bound by residues arginine 333 and lysine 351. Histidine 363 functions as the Proton acceptor in the catalytic mechanism. Tyrosine 366 and asparagine 377 together coordinate UDP-N-acetyl-alpha-D-glucosamine. Residues 386-387 (NY), alanine 423, and arginine 440 contribute to the acetyl-CoA site.

The protein in the N-terminal section; belongs to the N-acetylglucosamine-1-phosphate uridyltransferase family. This sequence in the C-terminal section; belongs to the transferase hexapeptide repeat family. Homotrimer. Mg(2+) is required as a cofactor.

It is found in the cytoplasm. The enzyme catalyses alpha-D-glucosamine 1-phosphate + acetyl-CoA = N-acetyl-alpha-D-glucosamine 1-phosphate + CoA + H(+). The catalysed reaction is N-acetyl-alpha-D-glucosamine 1-phosphate + UTP + H(+) = UDP-N-acetyl-alpha-D-glucosamine + diphosphate. It functions in the pathway nucleotide-sugar biosynthesis; UDP-N-acetyl-alpha-D-glucosamine biosynthesis; N-acetyl-alpha-D-glucosamine 1-phosphate from alpha-D-glucosamine 6-phosphate (route II): step 2/2. It participates in nucleotide-sugar biosynthesis; UDP-N-acetyl-alpha-D-glucosamine biosynthesis; UDP-N-acetyl-alpha-D-glucosamine from N-acetyl-alpha-D-glucosamine 1-phosphate: step 1/1. Its pathway is bacterial outer membrane biogenesis; LPS lipid A biosynthesis. Functionally, catalyzes the last two sequential reactions in the de novo biosynthetic pathway for UDP-N-acetylglucosamine (UDP-GlcNAc). The C-terminal domain catalyzes the transfer of acetyl group from acetyl coenzyme A to glucosamine-1-phosphate (GlcN-1-P) to produce N-acetylglucosamine-1-phosphate (GlcNAc-1-P), which is converted into UDP-GlcNAc by the transfer of uridine 5-monophosphate (from uridine 5-triphosphate), a reaction catalyzed by the N-terminal domain. The chain is Bifunctional protein GlmU from Listeria innocua serovar 6a (strain ATCC BAA-680 / CLIP 11262).